The sequence spans 163 residues: NADH-quinone oxidoreductase subunit I (163 aa).

2 4Fe-4S ferredoxin-type domains span residues 53–83 and 94–123; these read LRRY…IEAG and VRYD…EGPN. [4Fe-4S] cluster-binding residues include Cys63, Cys66, Cys69, Cys73, Cys103, Cys106, Cys109, and Cys113.

This sequence belongs to the complex I 23 kDa subunit family. As to quaternary structure, NDH-1 is composed of 14 different subunits. Subunits NuoA, H, J, K, L, M, N constitute the membrane sector of the complex. [4Fe-4S] cluster serves as cofactor.

It is found in the cell inner membrane. It carries out the reaction a quinone + NADH + 5 H(+)(in) = a quinol + NAD(+) + 4 H(+)(out). Functionally, NDH-1 shuttles electrons from NADH, via FMN and iron-sulfur (Fe-S) centers, to quinones in the respiratory chain. The immediate electron acceptor for the enzyme in this species is believed to be ubiquinone. Couples the redox reaction to proton translocation (for every two electrons transferred, four hydrogen ions are translocated across the cytoplasmic membrane), and thus conserves the redox energy in a proton gradient. The polypeptide is NADH-quinone oxidoreductase subunit I (Brucella canis (strain ATCC 23365 / NCTC 10854 / RM-666)).